The primary structure comprises 150 residues: Thyroid hormone-inducible hepatic protein (150 aa).

Positions 83-104 (KVAGNETSEAENDAAETEEAEE) are disordered. Serine 90 carries the phosphoserine modification. A compositionally biased stretch (acidic residues) spans 90 to 104 (SEAENDAAETEEAEE).

Belongs to the SPOT14 family. Homodimer. Heterodimer with MID1IP1. Interacts with THRB and PLAGL1. As to expression, mainly expressed in tissues that synthesize triglycerides.

Its subcellular location is the nucleus. The protein localises to the cytoplasm. In terms of biological role, plays a role in the regulation of lipogenesis, especially in lactating mammary gland. Important for the biosynthesis of triglycerides with medium-length fatty acid chains. May modulate lipogenesis by interacting with MID1IP1 and preventing its interaction with ACACA. May function as transcriptional coactivator. May modulate the transcription factor activity of THRB. This is Thyroid hormone-inducible hepatic protein (Thrsp) from Mus musculus (Mouse).